We begin with the raw amino-acid sequence, 384 residues long: MSRSKRDNNFYSVEIGDSTFTVLKRYQNLKPIGSGAQGIVCAAYDAILERNVAIKKLSRPFQNQTHAKRAYRELVLMKCVNHKNIIGLLNVFTPQKSLEEFQDVYIVMELMDANLCQVIQMELDHERMSYLLYQMLCGIKHLHSAGIIHRDLKPSNIVVKSDCTLKILDFGLARTAGTSFMMTPYVVTRYYRAPEVILGMGYKENVDLWSVGCIMGEMVCHKILFPGRDYIDQWNKVIEQLGTPCPEFMKKLQPTVRTYVENRPKYAGYSFEKLFPDVLFPADSEHNKLKASQARDLLSKMLVIDASKRISVDEALQHPYINVWYDPSEAEAPPPKIPDKQLDEREHTIEEWKELIYKEVMDLEERTKNGVIRGQPSPLAQVQQ.

The 296-residue stretch at 26-321 (YQNLKPIGSG…VDEALQHPYI (296 aa)) folds into the Protein kinase domain. ATP-binding positions include 32 to 40 (IGSGAQGIV) and K55. At C116 the chain carries S-nitrosocysteine. Catalysis depends on D151, which acts as the Proton acceptor. T183 carries the phosphothreonine; by MAP2K7 modification. The TXY signature appears at 183 to 185 (TPY). The residue at position 185 (Y185) is a Phosphotyrosine; by MAP2K4. Position 377 is a phosphoserine (S377).

It belongs to the protein kinase superfamily. CMGC Ser/Thr protein kinase family. MAP kinase subfamily. Binds to at least four scaffolding proteins, MAPK8IP1/JIP-1, MAPK8IP2/JIP-2, MAPK8IP3/JIP-3/JSAP1 and SPAG9/MAPK8IP4/JIP-4. These proteins also bind other components of the JNK signaling pathway. Forms a complex with MAPK8IP1 and ARHGEF28. Interacts with TP53 and WWOX. Interacts with JAMP. Interacts with NFATC4. Interacts with MECOM; regulates JNK signaling. Interacts with PIN1; this interaction mediates MAPK8 conformational changes leading to the binding of MAPK8 to its substrates. Interacts with HSF1 (via D domain and preferentially with hyperphosphorylated form); this interaction occurs under both normal growth conditions and immediately upon heat shock. Interacts (phosphorylated form) with NFE2; the interaction phosphorylates NFE2 in undifferentiated cells. Interacts with GRIPAP1. Interacts with POU5F1; phosphorylates POU5F1 at 'Ser-347'. Found in a complex with SH3RF1, RAC1, MAP3K11/MLK3, MAP2K7/MKK7 and MAPK8IP1/JIP1. Found in a complex with SH3RF1, RAC2, MAP3K7/TAK1, MAP2K7/MKK7, MAPK8IP1/JIP1 and MAPK9/JNK2. The cofactor is Mg(2+). Post-translationally, phosphorylated by TAOK2. Dually phosphorylated on Thr-183 and Tyr-185 by MAP2K7 and MAP2K4, which activates the enzyme. May be phosphorylated at Thr-183 and Tyr-185 by MAP3K1/MEKK1. Phosphorylated form is more concentrated at synapses than none-phosphorylated. As to expression, brain (at protein level).

The protein resides in the cytoplasm. The protein localises to the nucleus. It localises to the synapse. The catalysed reaction is L-seryl-[protein] + ATP = O-phospho-L-seryl-[protein] + ADP + H(+). It catalyses the reaction L-threonyl-[protein] + ATP = O-phospho-L-threonyl-[protein] + ADP + H(+). With respect to regulation, inhibited by SERPINB3. Activated by threonine and tyrosine phosphorylation by either of two dual specificity kinases, MAP2K4 and MAP2K7. MAP2K4 shows a strong preference for Tyr-185 while MAP2K7 phosphorylates Tyr-183 preferentially. Inhibited by dual specificity phosphatases, such as DUSP1. Functionally, serine/threonine-protein kinase involved in various processes such as cell proliferation, differentiation, migration, transformation and programmed cell death. Extracellular stimuli such as pro-inflammatory cytokines or physical stress stimulate the stress-activated protein kinase/c-Jun N-terminal kinase (SAP/JNK) signaling pathway. In this cascade, two dual specificity kinases MAP2K4/MKK4 and MAP2K7/MKK7 phosphorylate and activate MAPK8/JNK1. In turn, MAPK8/JNK1 phosphorylates a number of transcription factors, primarily components of AP-1 such as JUN, JDP2 and ATF2 and thus regulates AP-1 transcriptional activity. Phosphorylates the replication licensing factor CDT1, inhibiting the interaction between CDT1 and the histone H4 acetylase HBO1 to replication origins. Loss of this interaction abrogates the acetylation required for replication initiation. Promotes stressed cell apoptosis by phosphorylating key regulatory factors including p53/TP53 and Yes-associates protein YAP1. In T-cells, MAPK8 and MAPK9 are required for polarized differentiation of T-helper cells into Th1 cells. Contributes to the survival of erythroid cells by phosphorylating the antagonist of cell death BAD upon EPO stimulation. Mediates starvation-induced BCL2 phosphorylation, BCL2 dissociation from BECN1, and thus activation of autophagy. Phosphorylates STMN2 and hence regulates microtubule dynamics, controlling neurite elongation in cortical neurons. In the developing brain, through its cytoplasmic activity on STMN2, negatively regulates the rate of exit from multipolar stage and of radial migration from the ventricular zone. Phosphorylates several other substrates including heat shock factor protein 4 (HSF4), the deacetylase SIRT1, ELK1, or the E3 ligase ITCH. Phosphorylates the CLOCK-BMAL1 heterodimer and plays a role in the regulation of the circadian clock. Phosphorylates the heat shock transcription factor HSF1, suppressing HSF1-induced transcriptional activity. Phosphorylates POU5F1, which results in the inhibition of POU5F1's transcriptional activity and enhances its proteasomal degradation. Phosphorylates JUND and this phosphorylation is inhibited in the presence of MEN1. In neurons, phosphorylates SYT4 which captures neuronal dense core vesicles at synapses. Phosphorylates EIF4ENIF1/4-ET in response to oxidative stress, promoting P-body assembly. Phosphorylates SIRT6 in response to oxidative stress, stimulating its mono-ADP-ribosyltransferase activity. Phosphorylates NLRP3, promoting assembly of the NLRP3 inflammasome. Phosphorylates ALKBH5 in response to reactive oxygen species (ROS), promoting ALKBH5 sumoylation and inactivation. This Mus musculus (Mouse) protein is Mitogen-activated protein kinase 8 (Mapk8).